We begin with the raw amino-acid sequence, 751 residues long: Cyanobacterial phytochrome B (751 aa).

C17 contacts a tetrapyrrole. The interval I22–Q511 is chromophore binding domain. The GAF domain maps to T152 to E320. The 216-residue stretch at I536–V751 folds into the Histidine kinase domain. The residue at position 539 (H539) is a Phosphohistidine; by autocatalysis.

It in the N-terminal section; belongs to the phytochrome family. Post-translationally, contains one covalently linked tetrapyrrole chromophore.

The enzyme catalyses ATP + protein L-histidine = ADP + protein N-phospho-L-histidine.. Its function is as follows. Photoreceptor which exists in two forms that are reversibly interconvertible by light: the R form that absorbs maximally in the red region of the spectrum and the FR form that absorbs maximally in the far-red region. This Nostoc sp. (strain PCC 7120 / SAG 25.82 / UTEX 2576) protein is Cyanobacterial phytochrome B (bphB).